The sequence spans 533 residues: MLLLLLLLPMCWAVEVRRPRGVSLTNHHFYDESKPFTCLDGSASIPFDQVNDDYCDCKDGSDEPGTAACPNGSFHCTNTGYKALYISSRWVNDGVCDCCDGTDEYNSGIVCENTCKEKGRKERETLQQMAEVTREGFRLKKILIEDWKKAREEKQKKLIELQAGKKSLEDQVEVLRTLKEEAEKPEEAAKDQHRRLWEEQQAISKEQRERELAASAFQELDDDMDGAVSVAELQTHPELDTDGDGALSEGEAQTLLGGDAQMDAAFFYDRVWAAIRDKYRSEVLPTEYPPSPPAPDVMEPKEEQPPMPSPPTEEEDEDEEDEETEEDEDEEDEDSQGEQPKDAPPPAPAPQTASPTEEDRMPPYDEQTQAFINAAQEARNKFEEAERSLKDMEESIRNLEQEISFDFGPNGEFAYLYSQCYELTTNEYVYRLCPFKLVSQKPKLGGSPTSLGTWGSWAGPDHDKFSAMKYEQGTGCWQGPNRSTTVRLLCGKETVVTSTTEPSRCEYLMELMTPAACPEPPPEYPVEGDHDEL.

An N-terminal signal peptide occupies residues Met-1 to Ala-13. Ser-23 carries the post-translational modification Phosphoserine. 2 consecutive LDL-receptor class A domains span residues Phe-36–Pro-70 and Asn-71–Glu-112. 2 disulfides stabilise this stretch: Cys-38/Cys-57 and Cys-55/Cys-69. Asp-48 serves as a coordination point for substrate. Positions 49, 52, 54, 56, 62, and 63 each coordinate Ca(2+). Residue Asp-52 coordinates substrate. Asn-71 is a glycosylation site (N-linked (GlcNAc...) asparagine). 3 disulfides stabilise this stretch: Cys-76/Cys-98, Cys-96/Cys-111, and Cys-99/Cys-115. A Phosphoserine; by PKC modification is found at Ser-88. Ca(2+)-binding residues include Asp-93, Val-95, Asp-97, Asp-103, and Glu-104. The residue at position 165 (Lys-165) is an N6-succinyllysine. Ser-167 carries the phosphoserine modification. 2 consecutive EF-hand domains span residues Arg-208 to Gly-243 and Asp-244 to Tyr-279. Asp-221, Asp-223, Asp-225, and Glu-232 together coordinate Ca(2+). The disordered stretch occupies residues Leu-284 to Pro-363. A compositionally biased stretch (acidic residues) spans Thr-312–Gln-336. Ser-388 and Ser-395 each carry phosphoserine; by PKC. An MRH domain is found at Ser-418–Glu-519. Cys-420 and Cys-433 are oxidised to a cystine. The residue at position 439 (Ser-439) is a Phosphoserine; by PKC. Disulfide bonds link Cys-476–Cys-505 and Cys-490–Cys-517. An N-linked (GlcNAc...) asparagine glycan is attached at Asn-481. Residues His-530–Leu-533 carry the Prevents secretion from ER motif.

As to quaternary structure, heterodimer of a catalytic alpha subunit (GANAB) and a beta subunit (PRKCSH). Binds glycosylated PTPRC. In terms of tissue distribution, ubiquitous. Highly expressed in liver, spleen, lung, duodenum, stomach, adrenal gland, pituitary, testis, corpus luteum, uterus and fetal ovary.

It localises to the endoplasmic reticulum. Its pathway is glycan metabolism; N-glycan metabolism. Functionally, regulatory subunit of glucosidase II that cleaves sequentially the 2 innermost alpha-1,3-linked glucose residues from the Glc(2)Man(9)GlcNAc(2) oligosaccharide precursor of immature glycoproteins. Required for efficient PKD1/Polycystin-1 biogenesis and trafficking to the plasma membrane of the primary cilia. The polypeptide is Glucosidase 2 subunit beta (PRKCSH) (Bos taurus (Bovine)).